Reading from the N-terminus, the 272-residue chain is Cytochrome b-c1 complex subunit Rieske-2, mitochondrial (272 aa).

The transit peptide at 1–60 directs the protein to the mitochondrion; that stretch reads MLRIAGRRASSLSRWPVRSVAPSSSAFISANHFSSDDDSSSPRSISPSLASVFLHHTRGF. Over 61–109 the chain is Mitochondrial matrix; that stretch reads SSNSVSHAHDMGLVPDLPPTVAAIKNPTSKIVYDEHNHERYPPGDPSKR. A helical transmembrane segment spans residues 110-132; that stretch reads AFAYFVLTGGRFVYASLVRLLIL. The Mitochondrial intermembrane segment spans residues 133-272; it reads KFVLSMSASK…FLEENKLLIG (140 aa). In terms of domain architecture, Rieske spans 182–270; sequence INLANSVDLG…YSFLEENKLL (89 aa). [2Fe-2S] cluster is bound by residues cysteine 215, histidine 217, cysteine 234, and histidine 237. A disulfide bridge links cysteine 220 with cysteine 236.

It belongs to the Rieske iron-sulfur protein family. Component of the ubiquinol-cytochrome c oxidoreductase (cytochrome b-c1 complex, complex III, CIII), a multisubunit enzyme composed of 3 respiratory subunits cytochrome b, cytochrome c1 and Rieske protein, 2 core protein subunits, and several low-molecular weight protein subunits. The complex exists as an obligatory dimer and forms supercomplexes (SCs) in the inner mitochondrial membrane with cytochrome c oxidase (complex IV, CIV). Requires [2Fe-2S] cluster as cofactor. As to expression, high levels are seen in the flowers while a low level expression is seen in the roots, leaves and stems.

The protein resides in the mitochondrion inner membrane. It carries out the reaction a quinol + 2 Fe(III)-[cytochrome c](out) = a quinone + 2 Fe(II)-[cytochrome c](out) + 2 H(+)(out). Component of the ubiquinol-cytochrome c oxidoreductase, a multisubunit transmembrane complex that is part of the mitochondrial electron transport chain which drives oxidative phosphorylation. The respiratory chain contains 3 multisubunit complexes succinate dehydrogenase (complex II, CII), ubiquinol-cytochrome c oxidoreductase (cytochrome b-c1 complex, complex III, CIII) and cytochrome c oxidase (complex IV, CIV), that cooperate to transfer electrons derived from NADH and succinate to molecular oxygen, creating an electrochemical gradient over the inner membrane that drives transmembrane transport and the ATP synthase. The cytochrome b-c1 complex catalyzes electron transfer from ubiquinol to cytochrome c, linking this redox reaction to translocation of protons across the mitochondrial inner membrane, with protons being carried across the membrane as hydrogens on the quinol. In the process called Q cycle, 2 protons are consumed from the matrix, 4 protons are released into the intermembrane space and 2 electrons are passed to cytochrome c. The Rieske protein is a catalytic core subunit containing a [2Fe-2S] iron-sulfur cluster. It cycles between 2 conformational states during catalysis to transfer electrons from the quinol bound in the Q(0) site in cytochrome b to cytochrome c1. This is Cytochrome b-c1 complex subunit Rieske-2, mitochondrial from Nicotiana tabacum (Common tobacco).